The sequence spans 339 residues: Methylglutaconyl-CoA hydratase, mitochondrial (339 aa).

A mitochondrion-targeting transit peptide spans 1–67 (MAAAVAAAPG…AGGPAPKRGY (67 aa)). Residue Lys100 is modified to N6-acetyllysine; alternate. N6-succinyllysine; alternate is present on Lys100. The interval 105–119 (KNLIKMLSKAVDALK) is RNA-binding. Lys109 is subject to N6-succinyllysine. Lys113 and Lys144 each carry N6-acetyllysine; alternate. An N6-succinyllysine; alternate mark is found at Lys113 and Lys144. Residues Lys148 and Lys160 each carry the N6-succinyllysine modification. 2 positions are modified to N6-acetyllysine; alternate: Lys204 and Lys211. An N6-succinyllysine; alternate mark is found at Lys204 and Lys211. At Lys329 the chain carries N6-succinyllysine.

It belongs to the enoyl-CoA hydratase/isomerase family. As to quaternary structure, homohexamer.

It is found in the mitochondrion. It catalyses the reaction (3S)-3-hydroxy-3-methylglutaryl-CoA = 3-methyl-(2E)-glutaconyl-CoA + H2O. The enzyme catalyses (3S)-citramalyl-CoA = itaconyl-CoA + H2O. The catalysed reaction is 3-hydroxyisovaleryl-CoA = 3-methylbut-2-enoyl-CoA + H2O. It carries out the reaction (S)-3-hydroxyglutaryl-CoA = (2E)-glutaconyl-CoA + H2O. The protein operates within amino-acid degradation; L-leucine degradation; (S)-3-hydroxy-3-methylglutaryl-CoA from 3-isovaleryl-CoA: step 3/3. Its function is as follows. Catalyzes the fifth step in the leucine degradation pathway, the reversible hydration of 3-methylglutaconyl-CoA (3-MG-CoA) to 3-hydroxy-3-methylglutaryl-CoA (HMG-CoA). Can catalyze the reverse reaction but at a much lower rate in vitro. HMG-CoA is then quickly degraded by another enzyme (such as HMG-CoA lyase) to give acetyl-CoA and acetoacetate. Uses other substrates such as (2E)-glutaconyl-CoA efficiently in vitro, and to a lesser extent 3-methylcrotonyl-CoA (3-methyl-(2E)-butenoyl-CoA), crotonyl-CoA ((2E)-butenoyl-CoA) and 3-hydroxybutanoyl-CoA (the missing carboxylate reduces affinity to the active site). Originally it was identified as an RNA-binding protein as it binds to AU-rich elements (AREs) in vitro. AREs direct rapid RNA degradation and mRNA deadenylation. Might have itaconyl-CoA hydratase activity, converting itaconyl-CoA into citramalyl-CoA in the C5-dicarboxylate catabolism pathway. The C5-dicarboxylate catabolism pathway is required to detoxify itaconate, an antimicrobial metabolite and immunomodulator produced by macrophages during certain infections, that can act as a vitamin B12-poisoning metabolite. This chain is Methylglutaconyl-CoA hydratase, mitochondrial (AUH), found in Homo sapiens (Human).